Here is a 371-residue protein sequence, read N- to C-terminus: SufE-like protein 1, chloroplastic/mitochondrial (371 aa).

The N-terminal 66 residues, 1–66 (MAAAMSSSCC…ISTGIVPPPS (66 aa)), are a transit peptide targeting the chloroplast and mitochondrion. Cys-131 serves as the catalytic Cysteine persulfide intermediate. Cys-131 carries the S-glutathionyl cysteine modification. Residues 218–249 (VKGEEDSSSGESSESSFVSIPETKDEANVPEV) are disordered.

This sequence belongs to the SufE family. Heterotetramer with NFS2. Interacts with NFS2 and NIFS1. Interacts in vitro with GRXS14, GRXS15, GRXS16 and GRXS17, but not with GRXC5. Interacts in vivo only with GRXS14 and GRXS16. In terms of processing, glutathionylated. Glutathionylation strongly reduces the stimulation of NFS2 activity. Expressed in roots, leaves, stems and flowers.

It is found in the plastid. The protein localises to the chloroplast stroma. It localises to the mitochondrion. The protein operates within cofactor biosynthesis; iron-sulfur cluster biosynthesis. Functionally, participates in cysteine desulfurization mediated by NFS2 in chloroplast and NIFS1 in mitochondrion. Activates the cysteine desulfurase activity of NFS2. Cysteine desulfurization mobilizes sulfur from L-cysteine to yield L-alanine and supplies the inorganic sulfur for iron-sulfur (Fe-S) cluster formation. Glutaredoxins regulate SUFE1 activity by inducing its reduction and deglutathionylation. This Arabidopsis thaliana (Mouse-ear cress) protein is SufE-like protein 1, chloroplastic/mitochondrial.